A 157-amino-acid chain; its full sequence is MPSVESFELDHNAVKAPYVRHCGVHKVGTDGVVNKFDIRFCQPNKQAMKPDTIHTLEHLLAFTIRTYAEKYDHFDIIDISPMGCQTGYYLVVSGEPKVEEIVDLLEDTFKEAVEVTEIPAANEKQCGQAKLHDLEGAKRMMRFWLSQNKEDLLKVFG.

Fe cation-binding residues include His-54, His-58, and Cys-126.

This sequence belongs to the LuxS family. As to quaternary structure, homodimer. Fe cation is required as a cofactor.

It carries out the reaction S-(5-deoxy-D-ribos-5-yl)-L-homocysteine = (S)-4,5-dihydroxypentane-2,3-dione + L-homocysteine. In terms of biological role, involved in the synthesis of autoinducer 2 (AI-2) which is secreted by bacteria and is used to communicate both the cell density and the metabolic potential of the environment. The regulation of gene expression in response to changes in cell density is called quorum sensing. Catalyzes the transformation of S-ribosylhomocysteine (RHC) to homocysteine (HC) and 4,5-dihydroxy-2,3-pentadione (DPD). The sequence is that of S-ribosylhomocysteine lyase from Bacillus licheniformis (strain ATCC 14580 / DSM 13 / JCM 2505 / CCUG 7422 / NBRC 12200 / NCIMB 9375 / NCTC 10341 / NRRL NRS-1264 / Gibson 46).